The following is a 353-amino-acid chain: Photosystem II D2 protein (353 aa).

An N-acetylthreonine modification is found at Thr2. Thr2 bears the Phosphothreonine mark. A helical membrane pass occupies residues Cys41–Thr61. His118 contributes to the chlorophyll a binding site. The helical transmembrane segment at Gly125–Pro141 threads the bilayer. Pheophytin a-binding residues include Gln130 and Asn143. Residues Val153–Ser166 form a helical membrane-spanning segment. Residue His198 participates in chlorophyll a binding. Residues Ala208–Asp228 form a helical membrane-spanning segment. Residues His215 and Phe262 each coordinate a plastoquinone. Fe cation is bound at residue His215. Position 269 (His269) interacts with Fe cation. The chain crosses the membrane as a helical span at residues Gly279–Arg295.

It belongs to the reaction center PufL/M/PsbA/D family. PSII is composed of 1 copy each of membrane proteins PsbA, PsbB, PsbC, PsbD, PsbE, PsbF, PsbH, PsbI, PsbJ, PsbK, PsbL, PsbM, PsbT, PsbX, PsbY, PsbZ, Psb30/Ycf12, at least 3 peripheral proteins of the oxygen-evolving complex and a large number of cofactors. It forms dimeric complexes. The cofactor is The D1/D2 heterodimer binds P680, chlorophylls that are the primary electron donor of PSII, and subsequent electron acceptors. It shares a non-heme iron and each subunit binds pheophytin, quinone, additional chlorophylls, carotenoids and lipids. There is also a Cl(-1) ion associated with D1 and D2, which is required for oxygen evolution. The PSII complex binds additional chlorophylls, carotenoids and specific lipids..

It localises to the plastid. It is found in the chloroplast thylakoid membrane. It carries out the reaction 2 a plastoquinone + 4 hnu + 2 H2O = 2 a plastoquinol + O2. Its function is as follows. Photosystem II (PSII) is a light-driven water:plastoquinone oxidoreductase that uses light energy to abstract electrons from H(2)O, generating O(2) and a proton gradient subsequently used for ATP formation. It consists of a core antenna complex that captures photons, and an electron transfer chain that converts photonic excitation into a charge separation. The D1/D2 (PsbA/PsbD) reaction center heterodimer binds P680, the primary electron donor of PSII as well as several subsequent electron acceptors. D2 is needed for assembly of a stable PSII complex. In Nymphaea alba (White water-lily), this protein is Photosystem II D2 protein.